A 495-amino-acid chain; its full sequence is Cyclic GMP-AMP synthase (495 aa).

The interval 1-128 (MAARRGKSTR…AGATELAAPA (128 aa)) is disordered. The interval 1-134 (MAARRGKSTR…AAPARMEAPP (134 aa)) is DNA-binding. At Lys7 the chain carries N6-acetyllysine. Ser13 is modified (phosphoserine). Basic and acidic residues-rich tracts occupy residues 52 to 76 (CRREKSGPDPREKPQVRTRTARAED) and 105 to 116 (RAREARSARELR). Lys56 is subject to N6-acetyllysine. Position 57 is a phosphoserine (Ser57). The tract at residues 57-68 (SGPDPREKPQVR) is required for association with the cell membrane. Positions 103–134 (SCRAREARSARELRPQAGATELAAPARMEAPP) are required for activation upon DNA viral infection. Positions 143 to 148 (LEKVRL) match the Nuclear export signal motif. Lys145 is subject to N6-lactoyllysine. A DNA-binding region spans residues 147–190 (RLSRHEISEAAEVVNWVVEHLLRRLQGGESEFKGVALLRTGSYY). Residue Glu165 is modified to PolyADP-ribosyl glutamic acid. Thr186 is a binding site for GTP. Ser188 is subject to Phosphoserine. Position 188 (Ser188) interacts with ATP. Tyr190 is subject to Phosphotyrosine. Mg(2+)-binding residues include Glu200 and Asp202. Asp202 lines the 2',3'-cGAMP pocket. Lys206 participates in a covalent cross-link: Glycyl lysine isopeptide (Lys-Gly) (interchain with G-Cter in SUMO). Lys260 is covalently cross-linked (Glycyl lysine isopeptide (Lys-Gly) (interchain with G-Cter in ubiquitin)). Glu261 is modified (5-glutamyl polyglutamate). The short motif at 268-278 (GVTVERKRRGS) is the Nuclear localization signal element. The residue at position 278 (Ser278) is a Phosphoserine. GTP is bound at residue Asp294. Residue Asp294 coordinates Mg(2+). Residue Asp294 coordinates 2',3'-cGAMP. The interval 316 to 357 (SQWLGAKVKNNLKRQPFYLVPKHAKEGSGFQEETWRLSFSHI) is interaction with collided ribosomes. Lys322 participates in a covalent cross-link: Glycyl lysine isopeptide (Lys-Gly) (interchain with G-Cter in SUMO); alternate. Residue Lys322 forms a Glycyl lysine isopeptide (Lys-Gly) (interchain with G-Cter in ubiquitin); alternate linkage. 2',3'-cGAMP contacts are provided by Lys337 and Arg351. Residue 351–358 (RLSFSHIE) participates in GTP binding. Position 358 (Glu358) interacts with ATP. Lys359 carries the N6-acetyllysine modification. Residue Lys359 forms a Glycyl lysine isopeptide (Lys-Gly) (interchain with G-Cter in SUMO); alternate linkage. Lys359 is covalently cross-linked (Glycyl lysine isopeptide (Lys-Gly) (interchain with G-Cter in ubiquitin); alternate). The interval 359–382 (KDILKNHGQSKTCCEIDGVKCCRK) is DNA-binding. His365 is a Zn(2+) binding site. At Lys369 the chain carries N6-acetyllysine. Residue Lys369 forms a Glycyl lysine isopeptide (Lys-Gly) (interchain with G-Cter in SUMO) linkage. Residues Cys371, Cys372, and Cys379 each contribute to the Zn(2+) site. Residues Cys379 and Cys380 are each lipidated (S-palmitoyl cysteine). Glycyl lysine isopeptide (Lys-Gly) (interchain with G-Cter in ubiquitin) cross-links involve residues Lys386, Lys389, Lys396, and Lys397. Lys389 bears the N6-acetyllysine mark. Lys389 is an ATP binding site. A Phosphoserine modification is found at Ser410. 410 to 414 (SYHVK) is an ATP binding site. The S-palmitoyl cysteine moiety is linked to residue Cys449. Lys481 bears the N6-methyllysine mark.

Belongs to the mab-21 family. As to quaternary structure, monomer in the absence of DNA. Homodimer in presence of dsDNA: forms a 2:2 dimer with two enzymes binding to two DNA molecules. Interacts with nucleosomes; interaction is mainly mediated via histones H2A and H2B and inactivates the nucleotidyltransferase activity by blocking DNA-binding and subsequent activation. Interacts with PQBP1 (via WW domain). Interacts with TRIM14; this interaction recruits USP14, leading to deubiquitinate and stabilize CGAS and promote type I interferon production. Interacts with ZCCHC3; promoting sensing of dsDNA by CGAS. Interacts (when not monomethylated) with (poly-ADP-ribosylated) PARP1; interaction takes place in the nucleus and prevents the formation of the PARP1-TIMELESS complex. Interacts (when monomethylated) with SGF29; interaction with SGF29 prevents interaction with PARP1. Interacts with PCBP2; preventing the formation of liquid-like droplets in which CGAS is activated. Interacts with IRGM; promoting CGAS degradation. It depends on Mg(2+) as a cofactor. Mn(2+) is required as a cofactor. Requires Zn(2+) as cofactor. The N-terminal disordered part (1-134) is phosphorylated by AURKB during the G2-M transition, blocking CGAS liquid phase separation and preventing activation. Phosphorylation at Tyr-190 by BLK promotes cytosolic retention. Localizes into the nucleus following dephosphorylation at Tyr-190. Phosphorylation at Ser-410 activates the nucleotidyltransferase activity. Dephosphorylation at Ser-410 by PPP6C impairs its ability to bind GTP, thereby inactivating it. Phosphorylation at Ser-188 by PRKDC inhibits its cyclic GMP-AMP synthase activity by impairing homodimerization and activation. Phosphorylation at Ser-278 by AKT (AKT1, AKT2 or AKT3) suppresses the nucleotidyltransferase activity. Phosphorylation at Ser-278 by CDK1 during mitosis leads to its inhibition, thereby preventing CGAS activation by self-DNA during mitosis. Dephosphorylated at Ser-278 by protein phosphatase PP1 upon mitotic exit. In terms of processing, ubiquitinated at Lys-389 via 'Lys-48'-linked polyubiquitin chains, leading to its SQSTM1-mediated autophagic degradation. Interaction with TRIM14 promotes recruitment of USP14, leading to deubiquitinate Lys-389 and stabilize CGAS. Ubiquitinated at Lys-359 by RNF185 via 'Lys-27'-linked polyubiquitination, promoting CGAS cyclic GMP-AMP synthase activity. Monoubiquitination at Lys-322 by TRIM56 promotes oligomerization and subsequent activation. Monoubiquitination by TRIM41 promotes CGAS activation. Ubiquitination at Lys-260 via 'Lys-48'-linked polyubiquitination promotes its degradation. Deubiquitination at Lys-260 by USP29 promotes its stabilization. Deubiquitinated by USP27X, promoting its stabilization. Ubiquitinated at Lys-386 via 'Lys-63'-linked polyubiquitin chains by MARCHF8, leading to the inhibition of its DNA binding ability. In cycling cells, nucleosome-bound CGAS is ubiquitinated at Lys-396 and Lys-397 via 'Lys-48'-linked polyubiquitin chains by the ECS(SPSB3) complex, leading to its degradation: ubiquitination and degradation of nuclear CGAS during G1 and G2 phases is required to promote low intranuclear CGAS abundance before the next mitotic cycle. Post-translationally, sumoylated at Lys-206 by TRIM38 in uninfected cells and during the early phase of viral infection, promoting its stability by preventing ubiquitination at Lys-260 and subsequent degradation. Desumoylated by SENP2 during the late phase of viral infection. Sumoylation at Lys-322, Lys-359 and Lys-369 prevents DNA-binding, oligomerization and nucleotidyltransferase activity. Desumoylation at Lys-322, Lys-359 and Lys-369 by SENP7 relieves inhibition and activates CGAS. Polyglutamylated by TTLL6 at Glu-261, leading to impair DNA-binding activity. Deglutamylated by AGBL5/CCP5 and AGBL6/CCP6. In terms of processing, acetylation at Lys-359, Lys-369 and Lys-389 inhibits the cyclic GMP-AMP synthase activity. Deacetylated upon cytosolic DNA challenge such as viral infections. Acetylation by KAT5 increases the cyclic GMP-AMP synthase activity by promoting DNA-binding and subsequent activation. Post-translationally, proteolytically cleaved by apoptotic caspases during apoptosis, leading to its inactivation. The damage of the nucleus and the mitochondria during apoptosis leads to leakage of nuclear and mitochondrial DNA, which activate CGAS: cleavage and inactivation during apoptosis in required to prevent cytokine overproduction. Cleaved by CASP7 and CASP3 during virus-induced apoptosis, thereby inactivating it and preventing cytokine overproduction. Cleaved by CASP1 upon DNA virus infection; the cleavage impairs cGAMP production. Also cleaved by the pyroptotic CASP4 during non-canonical inflammasome activation; does not cut at the same sites than CASP1. Degraded via selective autophagy following interaction with IRGM. IRGM promotes CGAS recruitment to autophagosome membranes, promoting its SQSTM1/p62-dependent autophagic degradation. In terms of processing, poly-ADP-ribosylation at Glu-165 by PARP1 impairs DNA-binding, thereby preventing the cyclic GMP-AMP synthase activity. Post-translationally, palmitoylation at Cys-449 by ZDHHC18 impairs DNA-binding, thereby preventing the cyclic GMP-AMP synthase activity. Palmitoylation at Cys-379 and Cys-380 by ZDHHC9 promotes homodimerization and cyclic GMP-AMP synthase activity. Depalmitoylation at Cys-379 and Cys-380 by LYPLAL1 impairs homodimerization and cyclic GMP-AMP synthase activity. Monomethylated at Lys-481 by SETD7. Monomethylation promotes interaction with SGF29, preventing interaction between PARP1 nad SGF29. Demethylation by RIOX1 promotes interaction with PARP1, followed by PARP1 inactivation. In terms of processing, lactylation by AARS2 prevents ability to undergo liquid-liquid phase separation (LLPS), thereby inhibiting CGAS activation.

It is found in the nucleus. It localises to the chromosome. The protein localises to the cell membrane. Its subcellular location is the cytoplasm. The protein resides in the cytosol. It carries out the reaction GTP + ATP = 2',3'-cGAMP + 2 diphosphate. The catalysed reaction is GTP + ATP = pppGp(2'-5')A + diphosphate. It catalyses the reaction pppGp(2'-5')A = 2',3'-cGAMP + diphosphate. The enzyme activity is strongly increased by double-stranded DNA (dsDNA), but not by single-stranded DNA or RNA. DNA-binding induces the formation of liquid-like droplets in which CGAS is activated. Liquid-like droplets also create a selective environment that restricts entry of negative regulators, such as TREX1 or BANF1/BAF, allowing sensing of DNA. A number of mechanisms exist to restrict its activity toward self-DNA. The nucleotidyltransferase activity is inhibited in the nucleus via its association with nucleosomes: interacts with the acidic patch of histones H2A and H2B, thereby blocking DNA-binding and subsequent activation. CGAS is also inactive when associated with mitotic chromatin. Chromatin-bound CGAS cannot be activated by exogenous DNA in mitotic cells: phosphorylation of the N-terminal disordered part by AURKB during the G2-M transition blocks CGAS liquid phase separation and activation. Activity toward self-DNA is inhibited by BANF1/BAF upon acute loss of nuclear membrane integrity: BANF1/BAF acts by outcompeting CGAS for DNA-binding, thereby preventing CGAS activation. DNA-induced activation at micronuclei is also limited by TREX1, which degrades micronuclear DNA upon nuclear envelope rupture, thereby preventing CGAS activation. CGAS can be released from nucleosomes and activated by MRE11 component of the MRN complex, which displaces CGAS from acidic-patch-mediated sequestration. Acetylation at Lys-359, Lys-369 and Lys-389 inhibits the cyclic GMP-AMP synthase activity. Acetylation by KAT5 increases the cyclic GMP-AMP synthase activity by promoting DNA-binding and subsequent activation. Phosphorylation at Ser-278 suppresses the nucleotidyltransferase activity. Phosphorylation at Ser-410 promotes the cyclic GMP-AMP synthase activity. Phosphorylation at Ser-188 inhibits its cyclic GMP-AMP synthase activity. Ubiquitination at Lys-359 via 'Lys-27'-linked polyubiquitination enhances the cyclic GMP-AMP synthase activity. Monoubiquitination at Lys-322 promotes oligomerization and subsequent activation. Sumoylation at Lys-322, Lys-359 and Lys-369 prevents DNA-binding, oligomerization and nucleotidyltransferase activity. The enzyme activity is impaired by the cleavage by CASP1. In addition to DNA, also activated by collided ribosomes upon translation stress: specifically binds collided ribosomes, promoting its activation and triggering type-I interferon production. Nucleotidyltransferase that catalyzes the formation of cyclic GMP-AMP (2',3'-cGAMP) from ATP and GTP and plays a key role in innate immunity. Catalysis involves both the formation of a 2',5' phosphodiester linkage at the GpA step and the formation of a 3',5' phosphodiester linkage at the ApG step, producing c[G(2',5')pA(3',5')p]. Acts as a key DNA sensor: directly binds double-stranded DNA (dsDNA), inducing the formation of liquid-like droplets in which CGAS is activated, leading to synthesis of 2',3'-cGAMP, a second messenger that binds to and activates STING1, thereby triggering type-I interferon production. Preferentially binds long dsDNA (around 45 bp) and forms ladder-like networks that function cooperatively to stabilize individual cGAS-dsDNA complexes. Acts as a key foreign DNA sensor, the presence of double-stranded DNA (dsDNA) in the cytoplasm being a danger signal that triggers the immune responses. Has antiviral activity by sensing the presence of dsDNA from DNA viruses in the cytoplasm. Also acts as an innate immune sensor of infection by retroviruses by detecting the presence of reverse-transcribed DNA in the cytosol. Detection of retroviral reverse-transcribed DNA in the cytosol may be indirect and be mediated via interaction with PQBP1, which directly binds reverse-transcribed retroviral DNA. Also detects the presence of DNA from bacteria. 2',3'-cGAMP can be transferred from producing cells to neighboring cells through gap junctions, leading to promote STING1 activation and convey immune response to connecting cells. 2',3'-cGAMP can also be transferred between cells by virtue of packaging within viral particles contributing to IFN-induction in newly infected cells in a cGAS-independent but STING1-dependent manner. Also senses the presence of neutrophil extracellular traps (NETs) that are translocated to the cytosol following phagocytosis, leading to synthesis of 2',3'-cGAMP. In addition to foreign DNA, can also be activated by endogenous nuclear or mitochondrial DNA. When self-DNA leaks into the cytosol during cellular stress (such as mitochondrial stress, DNA damage, mitotic arrest or senescence), or is present in form of cytosolic micronuclei, CGAS is activated leading to a state of sterile inflammation. Acts as a regulator of cellular senescence by binding to cytosolic chromatin fragments that are present in senescent cells, leading to trigger type-I interferon production via STING1 and promote cellular senescence. Also involved in the inflammatory response to genome instability and double-stranded DNA breaks: acts by localizing to micronuclei arising from genome instability. Micronuclei, which are frequently found in cancer cells, consist of chromatin surrounded by their own nuclear membrane: following breakdown of the micronuclear envelope, a process associated with chromothripsis, CGAS binds self-DNA exposed to the cytosol, leading to 2',3'-cGAMP synthesis and subsequent activation of STING1 and type-I interferon production. In a healthy cell, CGAS is however kept inactive even in cellular events that directly expose it to self-DNA, such as mitosis, when cGAS associates with chromatin directly after nuclear envelope breakdown or remains in the form of postmitotic persistent nuclear cGAS pools bound to chromatin. Nuclear CGAS is inactivated by chromatin via direct interaction with nucleosomes, which block CGAS from DNA binding and thus prevent CGAS-induced autoimmunity. Also acts as a suppressor of DNA repair in response to DNA damage: inhibits homologous recombination repair by interacting with PARP1, the CGAS-PARP1 interaction leading to impede the formation of the PARP1-TIMELESS complex. In addition to DNA, also sense translation stress: in response to translation stress, translocates to the cytosol and associates with collided ribosomes, promoting its activation and triggering type-I interferon production. In Sus scrofa (Pig), this protein is Cyclic GMP-AMP synthase.